Here is a 241-residue protein sequence, read N- to C-terminus: General transcription factor IIF subunit 2 (241 aa).

Belongs to the TFIIF beta subunit family. Heterodimer of an alpha and a beta subunit.

It is found in the nucleus. Its function is as follows. TFIIF is a general transcription initiation factor that binds to RNA polymerase II and helps to recruit it to the initiation complex in collaboration with TFIIB. The sequence is that of General transcription factor IIF subunit 2 (gtf2f2) from Dictyostelium discoideum (Social amoeba).